Reading from the N-terminus, the 99-residue chain is Protein translation factor SUI1 homolog (99 aa).

This sequence belongs to the SUI1 family.

The chain is Protein translation factor SUI1 homolog from Pyrococcus horikoshii (strain ATCC 700860 / DSM 12428 / JCM 9974 / NBRC 100139 / OT-3).